The sequence spans 193 residues: 3-isopropylmalate dehydratase small subunit (193 aa).

This sequence belongs to the LeuD family. LeuD type 1 subfamily. In terms of assembly, heterodimer of LeuC and LeuD.

It catalyses the reaction (2R,3S)-3-isopropylmalate = (2S)-2-isopropylmalate. It functions in the pathway amino-acid biosynthesis; L-leucine biosynthesis; L-leucine from 3-methyl-2-oxobutanoate: step 2/4. Catalyzes the isomerization between 2-isopropylmalate and 3-isopropylmalate, via the formation of 2-isopropylmaleate. The chain is 3-isopropylmalate dehydratase small subunit from Bacillus cereus (strain ZK / E33L).